Consider the following 91-residue polypeptide: Em-like protein (91 aa).

2 stretches are compositionally biased toward basic and acidic residues: residues 1–18 and 31–51; these read MEQQ…REGE and DAQE…KEQI. The tract at residues 1-91 is disordered; it reads MEQQQDRREL…PIDESKYRHP (91 aa). Residues 62 to 73 are compositionally biased toward gly residues; it reads KGGLSSAGGPGG. Residues 75-91 are compositionally biased toward basic and acidic residues; it reads RASEEGRPIDESKYRHP.

Belongs to the small hydrophilic plant seed protein family.

The chain is Em-like protein from Picea glauca (White spruce).